A 136-amino-acid polypeptide reads, in one-letter code: Large ribosomal subunit protein uL16 (136 aa).

The protein belongs to the universal ribosomal protein uL16 family. As to quaternary structure, part of the 50S ribosomal subunit.

Functionally, binds 23S rRNA and is also seen to make contacts with the A and possibly P site tRNAs. The protein is Large ribosomal subunit protein uL16 of Haemophilus influenzae (strain 86-028NP).